The primary structure comprises 187 residues: Dihydrofolate reductase type A10 (187 aa).

The DHFR domain occupies 2 to 174; the sequence is NISLIFANEL…YSLSIDKFVR (173 aa).

This sequence belongs to the dihydrofolate reductase family. In terms of assembly, homodimer.

It catalyses the reaction (6S)-5,6,7,8-tetrahydrofolate + NADP(+) = 7,8-dihydrofolate + NADPH + H(+). It participates in cofactor biosynthesis; tetrahydrofolate biosynthesis; 5,6,7,8-tetrahydrofolate from 7,8-dihydrofolate: step 1/1. Functionally, key enzyme in folate metabolism. Catalyzes an essential reaction for de novo glycine and purine synthesis, and for DNA precursor synthesis. The polypeptide is Dihydrofolate reductase type A10 (dfrA10) (Escherichia coli).